Consider the following 518-residue polypeptide: Cytochrome P450 26C1 (518 aa).

A helical membrane pass occupies residues 293–313; that stretch reads LLFAAFFTTASASTSLILLLL. Residue C455 participates in heme binding.

The protein belongs to the cytochrome P450 family. It depends on heme as a cofactor.

The protein localises to the membrane. The enzyme catalyses an organic molecule + reduced [NADPH--hemoprotein reductase] + O2 = an alcohol + oxidized [NADPH--hemoprotein reductase] + H2O + H(+). The catalysed reaction is all-trans-retinoate + reduced [NADPH--hemoprotein reductase] + O2 = all-trans-4-hydroxyretinoate + oxidized [NADPH--hemoprotein reductase] + H2O + H(+). It carries out the reaction all-trans-4-hydroxyretinoate + reduced [NADPH--hemoprotein reductase] + O2 = all-trans-4-oxoretinoate + oxidized [NADPH--hemoprotein reductase] + 2 H2O + H(+). It catalyses the reaction 9-cis-retinoate + reduced [NADPH--hemoprotein reductase] + O2 = 9-cis-4-hydroxyretinoate + oxidized [NADPH--hemoprotein reductase] + H2O + H(+). The enzyme catalyses 9-cis-4-hydroxyretinoate + reduced [NADPH--hemoprotein reductase] + O2 = 9-cis-4-oxoretinoate + oxidized [NADPH--hemoprotein reductase] + 2 H2O + H(+). The catalysed reaction is all-trans-4-hydroxy-13,14-dihydroretinoate + reduced [NADPH--hemoprotein reductase] + O2 = all-trans-4-oxo-13,14-dihydroretinoate + oxidized [NADPH--hemoprotein reductase] + 2 H2O + H(+). It carries out the reaction all-trans-13,14-dihydroretinoate + reduced [NADPH--hemoprotein reductase] + O2 = all-trans-4-hydroxy-13,14-dihydroretinoate + oxidized [NADPH--hemoprotein reductase] + H2O + H(+). Functionally, a cytochrome P450 monooxygenase involved in the metabolism of retinoates (RAs), the active metabolites of vitamin A, and critical signaling molecules in animals. RAs exist as at least four different isomers: all-trans-RA (atRA), 9-cis-RA, 13-cis-RA, and 9,13-dicis-RA, where atRA is considered to be the biologically active isomer, although 9-cis-RA and 13-cis-RA also have activity. Catalyzes the oxidation of atRA primarily at C-4. Oxidation of atRA limits its biological activity and initiates a degradative process leading to its eventual elimination, thereby contributes to the regulation of atRA homeostasis and signaling. Able to metabolize other RAs such as 9-cis with high efficiency. Can oxidize all-trans-13,14-dihydroretinoate (DRA) to metabolites which could include all-trans-4-oxo-DRA, all-trans-4-hydroxy-DRA, all-trans-5,8-epoxy-DRA, and all-trans-18-hydroxy-DRA. Shares sequence similarity with other CYP26 family members, but has higher affinity to 9-cis-RA and is much less sensitive to the inhibitory effects of ketoconazole. In cooperation with Cyp26a1, contributes to the CNS patterning and the development of regions of higher visual acuity. In Mus musculus (Mouse), this protein is Cytochrome P450 26C1.